We begin with the raw amino-acid sequence, 145 residues long: Large ribosomal subunit protein uL24 (145 aa).

The segment at 108-145 is disordered; sequence EPIQEEQQKTEETKQEIAPEEVEAKEAQDKQEVKENDQ. A compositionally biased stretch (basic and acidic residues) spans 113-145; it reads EQQKTEETKQEIAPEEVEAKEAQDKQEVKENDQ.

This sequence belongs to the universal ribosomal protein uL24 family. As to quaternary structure, part of the 50S ribosomal subunit.

Its function is as follows. One of two assembly initiator proteins, it binds directly to the 5'-end of the 23S rRNA, where it nucleates assembly of the 50S subunit. Functionally, located at the polypeptide exit tunnel on the outside of the subunit. The polypeptide is Large ribosomal subunit protein uL24 (rpl24) (Thermoplasma volcanium (strain ATCC 51530 / DSM 4299 / JCM 9571 / NBRC 15438 / GSS1)).